The sequence spans 497 residues: Signal recognition particle subunit SRP54 2 (497 aa).

The G-domain stretch occupies residues 1–295 (MVLAQLGGSI…DVKPFVSRLL (295 aa)). Residues 108-115 (GLQGSGKT), 190-194 (DTSGR), and 248-251 (TKLD) each bind GTP. An M-domain region spans residues 296-497 (GMGDLSGLMD…MLGGMGLGGD (202 aa)).

It belongs to the GTP-binding SRP family. SRP54 subfamily. In terms of assembly, component of a signal recognition particle (SRP) complex that consists of a 7SL RNA molecule of 300 nucleotides and six protein subunits: SRP72, SRP68, SRP54, SRP19, SRP14 and SRP9.

Its subcellular location is the cytoplasm. The protein resides in the endoplasmic reticulum. The catalysed reaction is GTP + H2O = GDP + phosphate + H(+). Functionally, component of the signal recognition particle (SRP) complex, a ribonucleoprotein complex that mediates the cotranslational targeting of secretory and membrane proteins to the endoplasmic reticulum (ER). As part of the SRP complex, associates with the SRP receptor (SR) component SRPRA to target secretory proteins to the endoplasmic reticulum membrane. Binds to the signal sequence of presecretory proteins when they emerge from the ribosomes. Displays basal GTPase activity, and stimulates reciprocal GTPase activation of the SR subunit SRPRA. Forms a guanosine 5'-triphosphate (GTP)-dependent complex with the SR subunit SRPRA. SR compaction and GTPase mediated rearrangement of SR drive SRP-mediated cotranslational protein translocation into the ER. Requires the presence of SRP9/SRP14 and/or SRP19 to stably interact with RNA. The protein is Signal recognition particle subunit SRP54 2 (SRP54-2) of Hordeum vulgare (Barley).